Consider the following 62-residue polypeptide: Defensin BmKDfsin3 (62 aa).

The first 24 residues, 1–24, serve as a signal peptide directing secretion; that stretch reads MKTIVILFVLALVFCTLEMGMVEA. 3 disulfides stabilise this stretch: Cys28–Cys49, Cys35–Cys57, and Cys39–Cys59.

This sequence belongs to the invertebrate defensin family. Type 2 subfamily. Low expression in both venom and non-venom glands (hemolymph).

It localises to the secreted. Functionally, antibacterial peptide active against Gram-positive bacteria (including S.aureus ATCC25923 (MIC=2.5 uM), M.luteus AB93113 (MIC=2.5 uM), and the antibiotic-resistant S.epidermidis PRSE P1389 (MIC=1.25 uM)), but not against Gram-negative bacteria (including E.coli and P.aeruginosa). Also blocks the currents of Kv1.1/KCNA1 (57% inhibition), Kv1.2/KCNA2 (27.5% inhibition), Kv1.3/KCNA3 (IC(50)=23.4 nM, 84.3% inhibition), KCa3.1/KCNN4/IK (15% inhibition), KCa2.3/KCNN3/SK3 (87.5% inhibition) and Kv11.1/KCNH2/ERG1 (30.4% inhibition) channels (tested at 1 uM). It inhibits potassium channel current by interacting with the pore region. The protein is Defensin BmKDfsin3 of Olivierus martensii (Manchurian scorpion).